The following is a 114-amino-acid chain: MLNIYLKSKIHMATVTGKKLFYEGSIEIDEELMERAGISEGEMVLVVNVNNAERFVTYVIKGKRGSREINLNGAAARLAEEGDRVIIMAFTLSETPVKSKTIILNDKNEIVQEK.

Catalysis depends on Ser-25, which acts as the Schiff-base intermediate with substrate; via pyruvic acid. Ser-25 carries the pyruvic acid (Ser) modification. A substrate-binding site is contributed by Thr-57. Tyr-58 serves as the catalytic Proton donor. Substrate is bound at residue 73–75; that stretch reads GAA.

This sequence belongs to the PanD family. Heterooctamer of four alpha and four beta subunits. Pyruvate serves as cofactor. In terms of processing, is synthesized initially as an inactive proenzyme, which is activated by self-cleavage at a specific serine bond to produce a beta-subunit with a hydroxyl group at its C-terminus and an alpha-subunit with a pyruvoyl group at its N-terminus.

It localises to the cytoplasm. The catalysed reaction is L-aspartate + H(+) = beta-alanine + CO2. It participates in cofactor biosynthesis; (R)-pantothenate biosynthesis; beta-alanine from L-aspartate: step 1/1. Catalyzes the pyruvoyl-dependent decarboxylation of aspartate to produce beta-alanine. In Thermotoga sp. (strain RQ2), this protein is Aspartate 1-decarboxylase.